We begin with the raw amino-acid sequence, 145 residues long: Large ribosomal subunit protein uL15 (145 aa).

The disordered stretch occupies residues 1-43; sequence MRLNTIKPGAGSKSAAKRVGRGIGSGLGKTCGRGHKGQKSRAG. The segment covering 21–31 has biased composition (gly residues); the sequence is RGIGSGLGKTC.

It belongs to the universal ribosomal protein uL15 family. As to quaternary structure, part of the 50S ribosomal subunit.

Its function is as follows. Binds to the 23S rRNA. The polypeptide is Large ribosomal subunit protein uL15 (Aromatoleum aromaticum (strain DSM 19018 / LMG 30748 / EbN1) (Azoarcus sp. (strain EbN1))).